The primary structure comprises 305 residues: Ornithine carbamoyltransferase (305 aa).

Carbamoyl phosphate contacts are provided by residues 52 to 55 (STRT), Gln-79, Arg-103, and 130 to 133 (HPCQ). Residues Asn-161, Asp-222, and 226–227 (SM) contribute to the L-ornithine site. Carbamoyl phosphate is bound by residues 262–263 (CL) and Arg-290.

Belongs to the aspartate/ornithine carbamoyltransferase superfamily. OTCase family.

The protein resides in the cytoplasm. The enzyme catalyses carbamoyl phosphate + L-ornithine = L-citrulline + phosphate + H(+). It participates in amino-acid biosynthesis; L-arginine biosynthesis; L-arginine from L-ornithine and carbamoyl phosphate: step 1/3. Its function is as follows. Reversibly catalyzes the transfer of the carbamoyl group from carbamoyl phosphate (CP) to the N(epsilon) atom of ornithine (ORN) to produce L-citrulline. The protein is Ornithine carbamoyltransferase of Pelobacter propionicus (strain DSM 2379 / NBRC 103807 / OttBd1).